Here is a 312-residue protein sequence, read N- to C-terminus: DNA-directed RNA polymerase subunit alpha (312 aa).

The tract at residues Met-1–Lys-227 is alpha N-terminal domain (alpha-NTD). Residues Pro-243–Asn-312 are alpha C-terminal domain (alpha-CTD).

The protein belongs to the RNA polymerase alpha chain family. In terms of assembly, in plastids the minimal PEP RNA polymerase catalytic core is composed of four subunits: alpha, beta, beta', and beta''. When a (nuclear-encoded) sigma factor is associated with the core the holoenzyme is formed, which can initiate transcription.

The protein localises to the plastid. The protein resides in the chloroplast. It carries out the reaction RNA(n) + a ribonucleoside 5'-triphosphate = RNA(n+1) + diphosphate. Functionally, DNA-dependent RNA polymerase catalyzes the transcription of DNA into RNA using the four ribonucleoside triphosphates as substrates. The chain is DNA-directed RNA polymerase subunit alpha from Trieres chinensis (Marine centric diatom).